The primary structure comprises 253 residues: MRGKGVPVRLDKVSFSYGEAPLTFDVAFAAAEITAIMGPSGSGKSTLLNLVAGFETPQSGGVLIGGVDVGAAPPAARPVSMVFQENNLFAHLSVEQNVGLGRSPSLRLTEVDREAIDGALARTGLGGKEKRLPRELSGGERQRVALARVLVRDRPVLLLDEPFASLGPALRDDMLDLVAGVHAERGMTVLFVTHQPQDARRIGRNVVFLDNGTVAATGSADDFFAGAGPEAFRRYIGASAGNAVSQDIARKRT.

The ABC transporter domain occupies 8–236 (VRLDKVSFSY…AGPEAFRRYI (229 aa)). 38–45 (GPSGSGKS) lines the ATP pocket.

This sequence belongs to the ABC transporter superfamily. Thiamine importer (TC 3.A.1.19.1) family. As to quaternary structure, the complex is composed of two ATP-binding proteins (ThiQ), two transmembrane proteins (ThiP) and a solute-binding protein (ThiB).

It is found in the cell inner membrane. The enzyme catalyses thiamine(out) + ATP + H2O = thiamine(in) + ADP + phosphate + H(+). Its function is as follows. Part of the ABC transporter complex ThiBPQ involved in thiamine import. Responsible for energy coupling to the transport system. This Mesorhizobium japonicum (strain LMG 29417 / CECT 9101 / MAFF 303099) (Mesorhizobium loti (strain MAFF 303099)) protein is Thiamine import ATP-binding protein ThiQ.